A 319-amino-acid chain; its full sequence is Coproporphyrin III ferrochelatase 2 (319 aa).

Fe-coproporphyrin III-binding positions include Y13, R30, 46–47 (RY), S54, and Y125. 2 residues coordinate Fe(2+): H181 and E262.

Belongs to the ferrochelatase family.

The protein resides in the cytoplasm. The enzyme catalyses Fe-coproporphyrin III + 2 H(+) = coproporphyrin III + Fe(2+). Its pathway is porphyrin-containing compound metabolism; protoheme biosynthesis. Functionally, involved in coproporphyrin-dependent heme b biosynthesis. Catalyzes the insertion of ferrous iron into coproporphyrin III to form Fe-coproporphyrin III. The sequence is that of Coproporphyrin III ferrochelatase 2 from Bacillus cereus (strain ATCC 14579 / DSM 31 / CCUG 7414 / JCM 2152 / NBRC 15305 / NCIMB 9373 / NCTC 2599 / NRRL B-3711).